Reading from the N-terminus, the 407-residue chain is Uronyl 2-sulfotransferase (407 aa).

Residues methionine 1–alanine 20 form a disordered region. The Cytoplasmic segment spans residues methionine 1–tyrosine 49. A helical; Signal-anchor for type II membrane protein transmembrane segment spans residues glycine 50 to glycine 70. Residues glycine 71 to arginine 407 are Lumenal-facing. N-linked (GlcNAc...) asparagine glycans are attached at residues asparagine 85, asparagine 141, and asparagine 156. Residue histidine 169 is part of the active site. Residues asparagine 174 and asparagine 320 are each glycosylated (N-linked (GlcNAc...) asparagine). Positions threonine 386–tryptophan 400 are enriched in acidic residues. Residues threonine 386–arginine 407 form a disordered region.

It belongs to the sulfotransferase 3 family.

The protein resides in the golgi apparatus membrane. In terms of biological role, sulfotransferase that catalyzes the transfer of sulfate to the position 2 of uronyl residues in glycosaminoglycan chains. Has mainly activity toward iduronyl residues in dermatan sulfate, and weaker activity toward glucuronyl residues of chondroitin sulfate. Has no activity toward desulfated N-resulfated heparin. In Mus musculus (Mouse), this protein is Uronyl 2-sulfotransferase.